A 496-amino-acid polypeptide reads, in one-letter code: Aspartyl/glutamyl-tRNA(Asn/Gln) amidotransferase subunit B (496 aa).

It belongs to the GatB/GatE family. GatB subfamily. In terms of assembly, heterotrimer of A, B and C subunits.

The catalysed reaction is L-glutamyl-tRNA(Gln) + L-glutamine + ATP + H2O = L-glutaminyl-tRNA(Gln) + L-glutamate + ADP + phosphate + H(+). It carries out the reaction L-aspartyl-tRNA(Asn) + L-glutamine + ATP + H2O = L-asparaginyl-tRNA(Asn) + L-glutamate + ADP + phosphate + 2 H(+). Functionally, allows the formation of correctly charged Asn-tRNA(Asn) or Gln-tRNA(Gln) through the transamidation of misacylated Asp-tRNA(Asn) or Glu-tRNA(Gln) in organisms which lack either or both of asparaginyl-tRNA or glutaminyl-tRNA synthetases. The reaction takes place in the presence of glutamine and ATP through an activated phospho-Asp-tRNA(Asn) or phospho-Glu-tRNA(Gln). In Natronomonas pharaonis (strain ATCC 35678 / DSM 2160 / CIP 103997 / JCM 8858 / NBRC 14720 / NCIMB 2260 / Gabara) (Halobacterium pharaonis), this protein is Aspartyl/glutamyl-tRNA(Asn/Gln) amidotransferase subunit B.